The primary structure comprises 232 residues: Small ribosomal subunit protein uS3 (232 aa).

The KH type-2 domain occupies 39 to 107; it reads IREILHKELK…DVVINIVEIR (69 aa).

Belongs to the universal ribosomal protein uS3 family. As to quaternary structure, part of the 30S ribosomal subunit. Forms a tight complex with proteins S10 and S14.

Its function is as follows. Binds the lower part of the 30S subunit head. Binds mRNA in the 70S ribosome, positioning it for translation. The chain is Small ribosomal subunit protein uS3 from Rhodopseudomonas palustris (strain BisB18).